The sequence spans 516 residues: Ribonuclease Y (516 aa).

A helical transmembrane segment spans residues 1-21 (MLIKIVIACVITAIIVALIAW). Residues 206-269 (TISVVQLPND…ETARIALEKL (64 aa)) enclose the KH domain. The region spanning 332-425 (ALKHSIEVAI…VQAADTISAA (94 aa)) is the HD domain.

Belongs to the RNase Y family.

The protein resides in the cell membrane. Its function is as follows. Endoribonuclease that initiates mRNA decay. This chain is Ribonuclease Y, found in Lachnoclostridium phytofermentans (strain ATCC 700394 / DSM 18823 / ISDg) (Clostridium phytofermentans).